The sequence spans 196 residues: Molybdopterin synthase catalytic subunit (196 aa).

Residues 110–111 (HR), K126, and 133–135 (KKE) contribute to the substrate site. The tract at residues 142 to 196 (GGIWRANRDGAVGERVDEDEEKKKPDMGPHGPILRPSRPGERGHGPVVRNHQLGS) is disordered. Residues 147–168 (ANRDGAVGERVDEDEEKKKPDM) are compositionally biased toward basic and acidic residues.

The protein belongs to the MoaE family. MOCS2B subfamily. In terms of assembly, heterotetramer; composed of 2 small (MOCS2A) and 2 large (MOCS2B) subunits.

It is found in the cytoplasm. The catalysed reaction is 2 [molybdopterin-synthase sulfur-carrier protein]-C-terminal-Gly-aminoethanethioate + cyclic pyranopterin phosphate + H2O = molybdopterin + 2 [molybdopterin-synthase sulfur-carrier protein]-C-terminal Gly-Gly + 2 H(+). The protein operates within cofactor biosynthesis; molybdopterin biosynthesis. Its function is as follows. Catalytic subunit of the molybdopterin synthase complex, a complex that catalyzes the conversion of precursor Z into molybdopterin. Acts by mediating the incorporation of 2 sulfur atoms from thiocarboxylated MOCS2A into precursor Z to generate a dithiolene group. This is Molybdopterin synthase catalytic subunit from Sclerotinia sclerotiorum (strain ATCC 18683 / 1980 / Ss-1) (White mold).